A 537-amino-acid chain; its full sequence is Phosphoenolpyruvate carboxykinase (ATP) (537 aa).

Residues R61, Y195, and K201 each contribute to the substrate site. ATP-binding positions include K201, H220, and 236-244 (GLSGTGKTT). K201 and H220 together coordinate Mn(2+). Residue D257 participates in Mn(2+) binding. E285 serves as a coordination point for ATP. Positions 312-321 (DFNDGSKTEN) are enriched in basic and acidic residues. The interval 312–339 (DFNDGSKTENTRSAYPLESIPNASPTGR) is disordered. R323 serves as a coordination point for substrate. Positions 323 and 448 each coordinate ATP.

The protein belongs to the phosphoenolpyruvate carboxykinase (ATP) family. Mn(2+) is required as a cofactor.

It localises to the cytoplasm. It catalyses the reaction oxaloacetate + ATP = phosphoenolpyruvate + ADP + CO2. It participates in carbohydrate biosynthesis; gluconeogenesis. In terms of biological role, involved in the gluconeogenesis. Catalyzes the conversion of oxaloacetate (OAA) to phosphoenolpyruvate (PEP) through direct phosphoryl transfer between the nucleoside triphosphate and OAA. This chain is Phosphoenolpyruvate carboxykinase (ATP), found in Rhodopseudomonas palustris (strain BisB18).